An 85-amino-acid polypeptide reads, in one-letter code: Large ribosomal subunit protein bL27 (85 aa).

It belongs to the bacterial ribosomal protein bL27 family.

The chain is Large ribosomal subunit protein bL27 from Ruthia magnifica subsp. Calyptogena magnifica.